We begin with the raw amino-acid sequence, 141 residues long: Sperm-associated microtubule inner protein 10 (141 aa).

The segment covering 1–16 has biased composition (basic and acidic residues); the sequence is MASEKDDGPALPKLDD. Positions 1–33 are disordered; it reads MASEKDDGPALPKLDDDNQTAENTCKPAEEQPQ.

In terms of assembly, microtubule inner protein component of sperm flagellar doublet microtubules. As to expression, expressed predominantly in the testis.

It localises to the cytoplasm. Its subcellular location is the cytoskeleton. The protein localises to the flagellum axoneme. Its function is as follows. Microtubule inner protein (MIP) part of the dynein-decorated doublet microtubules (DMTs) in flagellum axoneme, which is required for flagellum beating. May serve to reinforce and thus stabilize the microtubule structure in the sperm flagella. Involved in the regulation of sperm motility. The sequence is that of Sperm-associated microtubule inner protein 10 (Spmip10) from Mus musculus (Mouse).